The sequence spans 281 residues: Secretory carrier-associated membrane protein 5 (281 aa).

The disordered stretch occupies residues 1 to 49; the sequence is MHHDPNPFDEGADDNPFSNGGGGGARRGGGGGGGGGGGGGKSQFSFGFG. Residues 1-139 are Cytoplasmic-facing; the sequence is MHHDPNPFDE…AQKLQYLAFA (139 aa). The segment covering 19-49 has biased composition (gly residues); it reads NGGGGGARRGGGGGGGGGGGGGKSQFSFGFG. Residues 76-102 adopt a coiled-coil conformation; sequence KELLQWEADLKRREADIRRREEALKSA. The next 4 helical transmembrane spans lie at 140–160, 167–187, 202–222, and 250–270; these read SWLG…VCWI, LFFL…LMWY, FGWF…AAIA, and IFYF…IWVL. Over 271–281 the chain is Cytoplasmic; the sequence is QKVYMYFRGHK.

It belongs to the SCAMP family.

It localises to the cell membrane. It is found in the cytoplasmic vesicle. The protein localises to the secretory vesicle membrane. In terms of biological role, probably involved in membrane trafficking. This Oryza sativa subsp. japonica (Rice) protein is Secretory carrier-associated membrane protein 5 (SCAMP5).